The chain runs to 388 residues: Succinate--CoA ligase [ADP-forming] subunit beta (388 aa).

Residues 9–244 (KGILSGFDVR…PHEYSEEELE (236 aa)) form the ATP-grasp domain. ATP-binding positions include K46, 53–55 (GRG), E99, V102, and E107. Mg(2+)-binding residues include N199 and D213. Substrate-binding positions include N264 and 320-322 (GIM).

It belongs to the succinate/malate CoA ligase beta subunit family. Heterotetramer of two alpha and two beta subunits. Mg(2+) is required as a cofactor.

The catalysed reaction is succinate + ATP + CoA = succinyl-CoA + ADP + phosphate. It carries out the reaction GTP + succinate + CoA = succinyl-CoA + GDP + phosphate. The protein operates within carbohydrate metabolism; tricarboxylic acid cycle; succinate from succinyl-CoA (ligase route): step 1/1. Succinyl-CoA synthetase functions in the citric acid cycle (TCA), coupling the hydrolysis of succinyl-CoA to the synthesis of either ATP or GTP and thus represents the only step of substrate-level phosphorylation in the TCA. The beta subunit provides nucleotide specificity of the enzyme and binds the substrate succinate, while the binding sites for coenzyme A and phosphate are found in the alpha subunit. The chain is Succinate--CoA ligase [ADP-forming] subunit beta from Anaplasma phagocytophilum (strain HZ).